A 289-amino-acid chain; its full sequence is Acetyl-coenzyme A carboxylase carboxyl transferase subunit beta (289 aa).

Residues 28 to 289 enclose the CoA carboxyltransferase N-terminal domain; it reads VMTKCPKCKK…QGEGMAVWQN (262 aa). Zn(2+) is bound by residues C32, C35, C51, and C54. A C4-type zinc finger spans residues 32 to 54; the sequence is CPKCKKIMYTKELLKNLKVCVNC.

Belongs to the AccD/PCCB family. Acetyl-CoA carboxylase is a heterohexamer composed of biotin carboxyl carrier protein (AccB), biotin carboxylase (AccC) and two subunits each of ACCase subunit alpha (AccA) and ACCase subunit beta (AccD). Zn(2+) serves as cofactor.

Its subcellular location is the cytoplasm. The catalysed reaction is N(6)-carboxybiotinyl-L-lysyl-[protein] + acetyl-CoA = N(6)-biotinyl-L-lysyl-[protein] + malonyl-CoA. It functions in the pathway lipid metabolism; malonyl-CoA biosynthesis; malonyl-CoA from acetyl-CoA: step 1/1. Its function is as follows. Component of the acetyl coenzyme A carboxylase (ACC) complex. Biotin carboxylase (BC) catalyzes the carboxylation of biotin on its carrier protein (BCCP) and then the CO(2) group is transferred by the transcarboxylase to acetyl-CoA to form malonyl-CoA. The protein is Acetyl-coenzyme A carboxylase carboxyl transferase subunit beta of Bacillus cytotoxicus (strain DSM 22905 / CIP 110041 / 391-98 / NVH 391-98).